Reading from the N-terminus, the 141-residue chain is MTCVLKGCVNEVTVLGHETCSIGHANKLRKQVADMVGVTRRCAENNCGWFVCVIINDFTFDVYNCCGRSHLEKCRKRFEARNREIWKQVERIRGEKASATVKKSHKSKPSKKKFKERKDFGTPKRFLRDDVPLGIDQLFVF.

The segment at 97-119 (ASATVKKSHKSKPSKKKFKERKD) is disordered. Residues 102 to 115 (KKSHKSKPSKKKFK) are compositionally biased toward basic residues.

This is 16 kDa protein from Beta vulgaris (Sugar beet).